The following is a 395-amino-acid chain: MLRWQTAGESHGEALVAMIEGLPAGVRISTDDIVSALARRRLGYGRGARMKFEQDKVRLLTGVRHGLTLGSPVAIEIANTEWPKWTEVMSADALDHDLPREGRNAPLSRPRPGHADLTGMRKYGFDDARPVLERSSARETASRVALGEVAKQFLDQAFGIRTVAHVVALGGVQTNPDLPLPTPDDLEALDASPVRTLDKEAEARIIERINEAKKASDTLGGVIEVLAYGVPAGIGTYVESDRRLDAALASAIMGIQAFKGVEIGDGFLEASRPGSQAHDEIVVNADGRIDRLSNRAGGIEGGMSNGQVIRVRGAMKPIPSIPKALRTVDVLTGESAQAINQRSDSTAVPAASVVAEAMVRLTLAKYALDKFGGDSVAETRRNLESYLASWPEHMR.

NADP(+)-binding residues include R40 and R46. The tract at residues 99–120 is disordered; the sequence is PREGRNAPLSRPRPGHADLTGM. Residues 134–136, 256–257, G301, 316–320, and R342 each bind FMN; these read RSS, QA, and KPIPS.

It belongs to the chorismate synthase family. In terms of assembly, homotetramer. It depends on FMNH2 as a cofactor.

The catalysed reaction is 5-O-(1-carboxyvinyl)-3-phosphoshikimate = chorismate + phosphate. It participates in metabolic intermediate biosynthesis; chorismate biosynthesis; chorismate from D-erythrose 4-phosphate and phosphoenolpyruvate: step 7/7. Catalyzes the anti-1,4-elimination of the C-3 phosphate and the C-6 proR hydrogen from 5-enolpyruvylshikimate-3-phosphate (EPSP) to yield chorismate, which is the branch point compound that serves as the starting substrate for the three terminal pathways of aromatic amino acid biosynthesis. This reaction introduces a second double bond into the aromatic ring system. The polypeptide is Chorismate synthase (Bifidobacterium longum (strain DJO10A)).